The primary structure comprises 677 residues: Histidine ammonia-lyase (677 aa).

A cross-link (5-imidazolinone (Cys-Gly)) is located at residues 269–271 (CSG). A 2,3-didehydroalanine (Ser) modification is found at S270.

This sequence belongs to the PAL/histidase family. Contains an active site 4-methylidene-imidazol-5-one (MIO), which is formed autocatalytically by cyclization and dehydration of residues Cys-Ser-Gly.

It catalyses the reaction L-histidine = trans-urocanate + NH4(+). It functions in the pathway amino-acid degradation; L-histidine degradation into L-glutamate; N-formimidoyl-L-glutamate from L-histidine: step 1/3. This is Histidine ammonia-lyase from Caenorhabditis elegans.